Consider the following 235-residue polypeptide: Ubiquinone biosynthesis O-methyltransferase (235 aa).

Residues arginine 36, glycine 56, aspartate 77, and methionine 122 each contribute to the S-adenosyl-L-methionine site.

Belongs to the methyltransferase superfamily. UbiG/COQ3 family.

The catalysed reaction is a 3-demethylubiquinol + S-adenosyl-L-methionine = a ubiquinol + S-adenosyl-L-homocysteine + H(+). The enzyme catalyses a 3-(all-trans-polyprenyl)benzene-1,2-diol + S-adenosyl-L-methionine = a 2-methoxy-6-(all-trans-polyprenyl)phenol + S-adenosyl-L-homocysteine + H(+). It functions in the pathway cofactor biosynthesis; ubiquinone biosynthesis. Functionally, O-methyltransferase that catalyzes the 2 O-methylation steps in the ubiquinone biosynthetic pathway. The protein is Ubiquinone biosynthesis O-methyltransferase of Leptothrix cholodnii (strain ATCC 51168 / LMG 8142 / SP-6) (Leptothrix discophora (strain SP-6)).